Reading from the N-terminus, the 161-residue chain is Large ribosomal subunit protein uL10 (161 aa).

This sequence belongs to the universal ribosomal protein uL10 family. Part of the ribosomal stalk of the 50S ribosomal subunit. The N-terminus interacts with L11 and the large rRNA to form the base of the stalk. The C-terminus forms an elongated spine to which L12 dimers bind in a sequential fashion forming a multimeric L10(L12)X complex.

Forms part of the ribosomal stalk, playing a central role in the interaction of the ribosome with GTP-bound translation factors. The sequence is that of Large ribosomal subunit protein uL10 (rplJ) from Wigglesworthia glossinidia brevipalpis.